The primary structure comprises 447 residues: MDEEYDVIVLGTGLTECILSGIMSVNGKKVLHMDRNPYYGGESSSITPLEELYKRFQLLEGPPESMGRGRDWNVDLIPKFLMANGQLVKMLLYTEVTRYLDFKVVEGSFVYKGGKIYKVPSTETEALASNLMGMFEKRRFRKFLVFVANFDENDPKTFEGVDPQTTSMRDVYRKFDLGQDVIDFTGHALALYRTDDYLDQPCLETINRIKLYSESLARYGKSPYLYPLYGLGELPQGFARLSAIYGGTYMLNKPVDDIIMENGKVVGVKSEGEVARCKQLICDPSYIPDRVRKAGQVIRIICILSHPIKNTNDANSCQIIIPQNQVNRKSDIYVCMISYAHNVAAQGKYIAIASTTVETTDPEKEVEPALELLEPIDQKFVAISDLYEPIDDGCESQVFCSCSYDATTHFETTCNDIKDIYKRMAGTAFDFENMKRKQNDVFGEAEQ.

This sequence belongs to the Rab GDI family. Interacts with RHOH. Interacts with the non-phosphorylated forms of RAB1A, RAB3A, RAB5A, RAB5B, RAB5C, RAB8A, RAB8B, RAB10, RAB12, RAB35, and RAB43.

Its subcellular location is the cytoplasm. The protein localises to the golgi apparatus. It localises to the trans-Golgi network. Its function is as follows. Regulates the GDP/GTP exchange reaction of most Rab proteins by inhibiting the dissociation of GDP from them, and the subsequent binding of GTP to them. Promotes the dissociation of GDP-bound Rab proteins from the membrane and inhibits their activation. Promotes the dissociation of RAB1A, RAB3A, RAB5A and RAB10 from membranes. The protein is Rab GDP dissociation inhibitor alpha (GDI1) of Pongo pygmaeus (Bornean orangutan).